The chain runs to 641 residues: Chaperone protein DnaK (641 aa).

Residue threonine 199 is modified to Phosphothreonine; by autocatalysis. Polar residues predominate over residues 603–613; sequence YTQQGGTAGSE. Positions 603 to 641 are disordered; that stretch reads YTQQGGTAGSETHSHEKAGGSGGDDVVDAEFEEVRDDKR. Positions 627–641 are enriched in acidic residues; that stretch reads DVVDAEFEEVRDDKR.

The protein belongs to the heat shock protein 70 family.

Acts as a chaperone. This Methylococcus capsulatus (strain ATCC 33009 / NCIMB 11132 / Bath) protein is Chaperone protein DnaK.